A 244-amino-acid chain; its full sequence is UPF0280 protein Msp_1322 (244 aa).

Belongs to the UPF0280 family.

This is UPF0280 protein Msp_1322 from Methanosphaera stadtmanae (strain ATCC 43021 / DSM 3091 / JCM 11832 / MCB-3).